The sequence spans 89 residues: cAMP-regulated phosphoprotein 21 (89 aa).

Positions 1–89 (MSEPGDLSQT…GGESLQDQTL (89 aa)) are disordered. The residue at position 2 (Ser-2) is an N-acetylserine. A phosphoserine mark is found at Ser-33 and Ser-56.

Interacts with CALM1. Phosphorylation at Ser-56 favors interaction with CALM1.

It is found in the cytoplasm. Its function is as follows. May act as a competitive inhibitor of calmodulin-dependent enzymes such as calcineurin in neurons. The protein is cAMP-regulated phosphoprotein 21 (ARPP21) of Bos taurus (Bovine).